We begin with the raw amino-acid sequence, 275 residues long: Large ribosomal subunit protein uL2 (275 aa).

Positions 214–275 (RWRGNRPTVR…NKFILSHRNK (62 aa)) are disordered. The segment covering 255–275 (KGKKTRSNKRTNKFILSHRNK) has biased composition (basic residues).

The protein belongs to the universal ribosomal protein uL2 family. Part of the 50S ribosomal subunit. Forms a bridge to the 30S subunit in the 70S ribosome.

In terms of biological role, one of the primary rRNA binding proteins. Required for association of the 30S and 50S subunits to form the 70S ribosome, for tRNA binding and peptide bond formation. It has been suggested to have peptidyltransferase activity; this is somewhat controversial. Makes several contacts with the 16S rRNA in the 70S ribosome. The sequence is that of Large ribosomal subunit protein uL2 from Blochmanniella pennsylvanica (strain BPEN).